Reading from the N-terminus, the 655-residue chain is MKRNRFFNTSAAIAISIALNTFFCSMQTIAAEPEETYLDFRKETIYFLFLDRFSDGDPSNNAGFNSATYDPNNLKKYTGGDLRGLINKLPYLKSLGVTSIWITPPIDNVNNTDAAGNTGYHGYWGRDYFRIDEHFGNLDDFKELTSLMHSPDYNMKLVLDYAPNHSNANDENEFGALYRDGVFITDYPTNVAANTGWYHHNGGVTNWNDFFQVKNHNLFNLSDLNQSNTDVYQYLLDGSKFWIDAGVDAIRIDAIKHMDKSFIQKWTSDIYDYSKSIGREGFFFFGEWFGASANTTTGVDGNAIDYANTSGSALLDFGFRDTLERVLVGRSGNTMKTLNSYLIKRQTVFTSDDWQVVFMDNHDMARIGTALRSNATTFGPGNNETGGSQSEAFAQKRIDLGLVATMTVRGIPAIYYGTEHYAANFTSNSFGQVGSDPYNREKMPGFDTESEAFSIIKTLGDLRKSSPAIQNGTYTELWVNDDILVFERRSGNDIVIVALNRGEANTINVKNIAVPNGVYPSLIGNNSVSVANKRTTLTLMQNEAVVIRSQSDDAENPTVQSINFTCNNGYTISGQSVYIIGNIPQLGGWDLTKAVKISPTQYPQWSASLELPSDLNVEWKCVKRNETNPTANVEWQSGANNQFNSNDTQTTNGSF.

The first 30 residues, 1-30 (MKRNRFFNTSAAIAISIALNTFFCSMQTIA), serve as a signal peptide directing secretion. D55, N60, N61, G79, and D81 together coordinate Ca(2+). 123–124 (YW) contacts substrate. N164 provides a ligand contact to Ca(2+). Substrate is bound by residues H165 and 217-220 (NLFN). D223 serves as a coordination point for Ca(2+). R251 is a binding site for substrate. D253 serves as the catalytic Nucleophile. 256 to 257 (KH) serves as a coordination point for substrate. Ca(2+) is bound at residue H257. The Proton donor role is filled by E287. Substrate is bound by residues H362, D436, and R440. One can recognise a CBM20 domain in the interval 554–655 (AENPTVQSIN…NDTQTTNGSF (102 aa)). The interval 630 to 655 (TANVEWQSGANNQFNSNDTQTTNGSF) is disordered.

Belongs to the glycosyl hydrolase 13 family. As to quaternary structure, monomer. Ca(2+) is required as a cofactor.

It carries out the reaction Cyclizes part of a (1-&gt;4)-alpha-D-glucan chain by formation of a (1-&gt;4)-alpha-D-glucosidic bond.. The protein is Cyclomaltodextrin glucanotransferase (cgt) of Klebsiella oxytoca.